Here is a 596-residue protein sequence, read N- to C-terminus: (E)-beta-ocimene synthase, chloroplastic (596 aa).

Residues 1–35 constitute a chloroplast transit peptide; sequence MAITHYQMASFQSSFHFCMLRKTLRQKSSLHFAKR. The (2E)-geranyl diphosphate site is built by R307, D344, D348, R485, and N488. 2 residues coordinate Mg(2+): D344 and D348. A DDXXD motif motif is present at residues 344–348; the sequence is DDIYD. Residues N488, A492, and E496 each contribute to the Mg(2+) site.

The protein belongs to the terpene synthase family. Tpsb subfamily. Requires Mg(2+) as cofactor. Mn(2+) serves as cofactor. In terms of tissue distribution, highly expressed in leaves, stems and disk florets. Detected in roots.

The protein localises to the plastid. It is found in the chloroplast. It catalyses the reaction (2E)-geranyl diphosphate = (E)-beta-ocimene + diphosphate. It participates in secondary metabolite biosynthesis; terpenoid biosynthesis. In terms of biological role, monoterpene synthase involved in the biosynthesis of (E)-beta-ocimene as the major product and trace amounts of (Z)-beta-ocimene. Can only accept geranyl diphosphate as substrate. This Matricaria chamomilla var. recutita (German chamomile) protein is (E)-beta-ocimene synthase, chloroplastic.